Here is a 600-residue protein sequence, read N- to C-terminus: Aspartate--tRNA(Asp/Asn) ligase (600 aa).

E181 is an L-aspartate binding site. An aspartate region spans residues 205–208 (QQYK). Residue R227 coordinates L-aspartate. ATP is bound by residues 227–229 (RDE) and Q236. H455 serves as a coordination point for L-aspartate. Position 490 (E490) interacts with ATP. An L-aspartate-binding site is contributed by R497. 542–545 (GLDR) serves as a coordination point for ATP.

Belongs to the class-II aminoacyl-tRNA synthetase family. Type 1 subfamily. As to quaternary structure, homodimer.

Its subcellular location is the cytoplasm. It catalyses the reaction tRNA(Asx) + L-aspartate + ATP = L-aspartyl-tRNA(Asx) + AMP + diphosphate. Aspartyl-tRNA synthetase with relaxed tRNA specificity since it is able to aspartylate not only its cognate tRNA(Asp) but also tRNA(Asn). Reaction proceeds in two steps: L-aspartate is first activated by ATP to form Asp-AMP and then transferred to the acceptor end of tRNA(Asp/Asn). The protein is Aspartate--tRNA(Asp/Asn) ligase of Methylacidiphilum infernorum (isolate V4) (Methylokorus infernorum (strain V4)).